The chain runs to 1459 residues: MAPVQLDNHQLIPPGGGGGSSGGGGSSSGSASAPAPPPPAAAVAAAAAAAASPGYRLSTLIEFLLHRAYSELMVLTDLLPRKSDVERKIEIVQFASRTRQLFVRLLALVKWANDAGKVEKCAMISSFLDQQAILFVDTADRLASLARDALVHARLPSFAIPYAIDVLTTGSYPRLPTCIRDKIIPPDPITKIEKQATLHQLNQILRHRLVTTDLPPQLANLTVANGRVKFRVEGEFEATLTVMGDDPEVPWRLLKLEILVEDKETGDGRALVHSMQIDFIHQLVQSRLFADEKPLQDMYNCLHCFCLSLQLEVLHSQTLMLIRERWGDLVQVERYHAGKSLSLSVWNQQVLGRKTGTASVHKVTIKIDENDVSKPLQIFHDPPLPASDSKLVERAMKIDHLSIEKLLIDSVHARAHQRLQELKAILRSFNANESSSIETALPALIVPILEPCGNSECLHIFVDLHSGMFQLMLYGLDPATLEDMEKSLNDDMKRIIPWIQQLKFWLGQQRCKQSIKHLPTITTETLQLANYSTHPIGSLSKNKLFIKLTRLPQYYIVVEMLEVPNKPTQLSYNYYFMSVSTADREDSPVMALLLQQFKDNIQDLMSYTKTGKQTRTGTKHKLSDDPCPIDSKKAKRSGEMCAFNKVLAHFVAMCDTNMPFVGLRLELSNLEIPHQGVQVEGDGFNHAIRLLKIPPCKGISEETQKALDRSLLDCTFRLQGRNNRTWVAELVFANCPLNGTSTREQGPSRHVYLTYENLLSEPVGGRKVVEMFLNDWSSIARLYECVLEFARSLPEIPAHLNIFSEVRVYNYRKLILCYGTTKGSSISIQWNSIHQKFHIALGTVGPNSGCSNCHNTILHQLQEMFNKTPNVVQLLQVLFDTQAPLNAINKLPTVPMLGLTQRTNTAYQCFSILPQSSTHIRLAFRNMYCIDIYCRSRGVVAIRDGAYSLFDNSKLVEGFYPAPGLKTFLNMFVDSNQDARRRSVNEDDNPPSPIGGDMMDSLISQLQPPQQQPFPKQPGTSGAYPLTSPPTSYHSTVNQSPSMMHTQSPGNLHAASSPSGALRAPSPASFVPTPPPSSHGISIGPGASFASPHGTLDPSSPYTMVSPSGRAGNWPGSPQVSGPSPATRLPGMSPANPSLHSPVPDVSHSPRAGTSSQTMPTNMPPPRKLPQRSWAASIPTILTHSALNILLLPSPTPGLVPGLAGSYLCSPLERFLGSVIMRRHLQRIIQQETLQLINSNEPGVIMFKTDALKCRVALSPKTNQTLQLKVTPENAGQWKPDELQVLEKFFETRVAGPPFKANTLIAFTKLLGAPTHILRDCVHIMKLELFPDQATQLKWNVQFCLTIPPSAPPIAPPGTPAVVLKSKMLFFLQLTQKTSVPPQEPVSIIVPIIYDMASGTTQQADIPRQQNSSVAAPMMVSNILKRFAEMNPPRQGECTIFAAVRDLMANLTLPPGGRP.

The interval 1-37 (MAPVQLDNHQLIPPGGGGGSSGGGGSSSGSASAPAPP) is disordered. The segment covering 14–27 (PGGGGGSSGGGGSS) has biased composition (gly residues). The LXXLL motif 1 motif lies at 75–79 (LTDLL). Residues 194–572 (KQATLHQLNQ…VPNKPTQLSY (379 aa)) are interaction with STAT2. The tract at residues 506-830 (LGQQRCKQSI…TKGSSISIQW (325 aa)) is interaction with SREBF1. Residues Ser-623 and Ser-992 each carry the phosphoserine modification. Residues 979–1171 (ARRRSVNEDD…NMPPPRKLPQ (193 aa)) are disordered. Polar residues-rich tracts occupy residues 1029–1059 (PPTSYHSTVNQSPSMMHTQSPGNLHAASSPS) and 1097–1106 (DPSSPYTMVS). 5 positions are modified to phosphoserine: Ser-1117, Ser-1124, Ser-1133, Ser-1141, and Ser-1149. Polar residues predominate over residues 1152–1161 (AGTSSQTMPT). An LXXLL motif 2 motif is present at residues 1187–1191 (LNILL).

This sequence belongs to the Mediator complex subunit 14 family. In terms of assembly, component of the Mediator complex, which is composed of MED1, MED4, MED6, MED7, MED8, MED9, MED10, MED11, MED12, MED13, MED13L, MED14, MED15, MED16, MED17, MED18, MED19, MED20, MED21, MED22, MED23, MED24, MED25, MED26, MED27, MED29, MED30, MED31, CCNC, CDK8 and CDC2L6/CDK11. The MED12, MED13, CCNC and CDK8 subunits form a distinct module termed the CDK8 module. Mediator containing the CDK8 module is less active than Mediator lacking this module in supporting transcriptional activation. Individual preparations of the Mediator complex lacking one or more distinct subunits have been variously termed ARC, CRSP, DRIP, PC2, SMCC and TRAP. Interacts with AR, ESR1, SREBF1 and STAT2. Interacts with GATA1.

It is found in the nucleus. In terms of biological role, component of the Mediator complex, a coactivator involved in the regulated transcription of nearly all RNA polymerase II-dependent genes. Mediator functions as a bridge to convey information from gene-specific regulatory proteins to the basal RNA polymerase II transcription machinery. Mediator is recruited to promoters by direct interactions with regulatory proteins and serves as a scaffold for the assembly of a functional preinitiation complex with RNA polymerase II and the general transcription factors. The sequence is that of Mediator of RNA polymerase II transcription subunit 14 (Med14) from Mus musculus (Mouse).